The sequence spans 298 residues: Phosphatidylglycerol--prolipoprotein diacylglyceryl transferase (298 aa).

7 helical membrane passes run Leu17–Gly37, Met59–Tyr79, Gly97–Trp117, Phe129–Gly149, Ser204–Ala224, Met230–Phe250, and Phe257–Leu277. A 1,2-diacyl-sn-glycero-3-phospho-(1'-sn-glycerol) is bound at residue Arg142.

Belongs to the Lgt family.

It is found in the cell inner membrane. It carries out the reaction L-cysteinyl-[prolipoprotein] + a 1,2-diacyl-sn-glycero-3-phospho-(1'-sn-glycerol) = an S-1,2-diacyl-sn-glyceryl-L-cysteinyl-[prolipoprotein] + sn-glycerol 1-phosphate + H(+). It functions in the pathway protein modification; lipoprotein biosynthesis (diacylglyceryl transfer). In terms of biological role, catalyzes the transfer of the diacylglyceryl group from phosphatidylglycerol to the sulfhydryl group of the N-terminal cysteine of a prolipoprotein, the first step in the formation of mature lipoproteins. This chain is Phosphatidylglycerol--prolipoprotein diacylglyceryl transferase, found in Burkholderia orbicola (strain MC0-3).